Reading from the N-terminus, the 103-residue chain is Carboxysome shell protein CcmK2 (103 aa).

The 87-residue stretch at 4–90 folds into the BMC domain; it reads AVGMIETRGF…PHENLEYVLP (87 aa).

Belongs to the bacterial microcompartments protein family. CcmK subfamily. As to quaternary structure, homohexamer, might also make dodecamers. Interacts with full-length CcmM. Forms mixed heterohexamers of all possible stoichiometries with CcmK1, which might form dodecamers. Only very weak interactions with CcmK3 and CcmK4 were seen.

Its subcellular location is the carboxysome. In terms of biological role, one of the shell proteins of the carboxysome, a polyhedral inclusion where RuBisCO (ribulose bisphosphate carboxylase, rbcL-rbcS) is sequestered. The central pore probably regulates metabolite flux. Hexamers make sheets that form the facets of the polyhedral carboxysome. The sequence is that of Carboxysome shell protein CcmK2 from Synechocystis sp. (strain ATCC 27184 / PCC 6803 / Kazusa).